The primary structure comprises 162 residues: ATP synthase subunit b (162 aa).

Residues 6 to 25 (TLFTLVTFLVLMLAVGKVAW) traverse the membrane as a helical segment.

It belongs to the ATPase B chain family. As to quaternary structure, F-type ATPases have 2 components, F(1) - the catalytic core - and F(0) - the membrane proton channel. F(1) has five subunits: alpha(3), beta(3), gamma(1), delta(1), epsilon(1). F(0) has three main subunits: a(1), b(2) and c(10-14). The alpha and beta chains form an alternating ring which encloses part of the gamma chain. F(1) is attached to F(0) by a central stalk formed by the gamma and epsilon chains, while a peripheral stalk is formed by the delta and b chains.

It is found in the cell membrane. In terms of biological role, f(1)F(0) ATP synthase produces ATP from ADP in the presence of a proton or sodium gradient. F-type ATPases consist of two structural domains, F(1) containing the extramembraneous catalytic core and F(0) containing the membrane proton channel, linked together by a central stalk and a peripheral stalk. During catalysis, ATP synthesis in the catalytic domain of F(1) is coupled via a rotary mechanism of the central stalk subunits to proton translocation. Functionally, component of the F(0) channel, it forms part of the peripheral stalk, linking F(1) to F(0). This is ATP synthase subunit b from Lacticaseibacillus casei (strain BL23) (Lactobacillus casei).